The primary structure comprises 104 residues: MSYAVIVTGGKQYKVAEGEFLKIEKLEVATGESVTFDRVLLVANGDDVTIGAPVVAGAKVVAEVVSQGRHDKVRIIKFRRRKHHMKRMGHRQWFTEIKITGIQA.

It belongs to the bacterial ribosomal protein bL21 family. As to quaternary structure, part of the 50S ribosomal subunit. Contacts protein L20.

In terms of biological role, this protein binds to 23S rRNA in the presence of protein L20. This chain is Large ribosomal subunit protein bL21, found in Pseudomonas entomophila (strain L48).